Consider the following 133-residue polypeptide: Small ribosomal subunit protein uS8 (133 aa).

Belongs to the universal ribosomal protein uS8 family. Part of the 30S ribosomal subunit. Contacts proteins S5 and S12.

Functionally, one of the primary rRNA binding proteins, it binds directly to 16S rRNA central domain where it helps coordinate assembly of the platform of the 30S subunit. The sequence is that of Small ribosomal subunit protein uS8 from Chlamydia trachomatis serovar L2b (strain UCH-1/proctitis).